Consider the following 86-residue polypeptide: Progonadoliberin IIA (86 aa).

The N-terminal stretch at 1–24 is a signal peptide; it reads MVHICRLFVVMGMLLCLSAQFASS. Gln25 is modified (pyrrolidone carboxylic acid). The residue at position 34 (Gly34) is a Glycine amide.

The protein belongs to the GnRH family. Olfactory bulbs, hypothalamus and telencephalon, midbrain and posterior brain areas.

The protein resides in the secreted. In terms of biological role, stimulates the secretion of gonadotropins. The protein is Progonadoliberin IIA (gnrh2a) of Carassius auratus (Goldfish).